Here is a 184-residue protein sequence, read N- to C-terminus: Large ribosomal subunit protein uL6 (184 aa).

Belongs to the universal ribosomal protein uL6 family. In terms of assembly, part of the 50S ribosomal subunit.

In terms of biological role, this protein binds to the 23S rRNA, and is important in its secondary structure. It is located near the subunit interface in the base of the L7/L12 stalk, and near the tRNA binding site of the peptidyltransferase center. In Thermotoga petrophila (strain ATCC BAA-488 / DSM 13995 / JCM 10881 / RKU-1), this protein is Large ribosomal subunit protein uL6.